The primary structure comprises 201 residues: Small ribosomal subunit protein uS4c (201 aa).

The disordered stretch occupies residues 17 to 44 (ALPGLTNKKPRTGSDLRNQSRSGKKSQY). The S4 RNA-binding domain occupies 89-149 (MRLDNILFRL…DEQKSRALIQ (61 aa)).

This sequence belongs to the universal ribosomal protein uS4 family. In terms of assembly, part of the 30S ribosomal subunit. Contacts protein S5. The interaction surface between S4 and S5 is involved in control of translational fidelity.

It localises to the plastid. The protein localises to the chloroplast. One of the primary rRNA binding proteins, it binds directly to 16S rRNA where it nucleates assembly of the body of the 30S subunit. In terms of biological role, with S5 and S12 plays an important role in translational accuracy. The sequence is that of Small ribosomal subunit protein uS4c (rps4) from Atropa belladonna (Belladonna).